A 533-amino-acid chain; its full sequence is DnaJ homolog subfamily C member 21 (533 aa).

One can recognise a J domain in the interval 3–70 (CHYEALGVRR…ERAWYDNHRE (68 aa)). Disordered stretches follow at residues 278–311 (QFGDGSGEDEAEDQELRDGQDGKDSDEAEDAELY), 327–473 (KAMR…RVPA), and 503–533 (KATGHARAPSSSTSLNSVTNSRNKKEKRKNR). Phosphoserine occurs at positions 283 and 302. The segment covering 291–302 (QELRDGQDGKDS) has biased composition (basic and acidic residues). The segment at 315-339 (YCPACDKSFKTEKAMRNHEKSKKHR) adopts a C2H2-type 1 zinc-finger fold. The segment covering 357-369 (SGPQTDENSLNAN) has biased composition (polar residues). Position 370 is a phosphoserine (Ser370). Over residues 381–392 (KLSRKQKKKKQK) the composition is skewed to basic residues. The span at 393-403 (PAQNYDDNFNE) shows a compositional bias: polar residues. A compositionally biased stretch (basic residues) spans 455–464 (SKPKGKKAKD). The segment at 484–508 (SCTTCHSEFPSRNKLFDHLKATGHA) adopts a C2H2-type 2 zinc-finger fold. Ser512 is subject to Phosphoserine. The segment covering 512 to 523 (SSSTSLNSVTNS) has biased composition (low complexity). The span at 524-533 (RNKKEKRKNR) shows a compositional bias: basic residues.

As to quaternary structure, interacts with HSPA8, PA2G4 and ZNF622.

The protein resides in the cytoplasm. It localises to the nucleus. The protein localises to the nucleolus. Its function is as follows. May act as a co-chaperone for HSP70. May play a role in ribosomal RNA (rRNA) biogenesis, possibly in the maturation of the 60S subunit. Binds the precursor 45S rRNA. The polypeptide is DnaJ homolog subfamily C member 21 (DNAJC21) (Bos taurus (Bovine)).